The primary structure comprises 225 residues: Heptaprenylglyceryl phosphate synthase (225 aa).

Lysine 6 contributes to the sn-glycerol 1-phosphate binding site. The Mg(2+) site is built by aspartate 8 and threonine 34. Residues 153–158 (YVEYSG), glycine 183, and 203–204 (GN) each bind sn-glycerol 1-phosphate.

It belongs to the GGGP/HepGP synthase family. Group I subfamily. Homodimer. Mg(2+) is required as a cofactor.

The catalysed reaction is sn-glycerol 1-phosphate + all-trans-heptaprenyl diphosphate = 3-heptaprenyl-sn-glycero-1-phosphate + diphosphate. It functions in the pathway membrane lipid metabolism; glycerophospholipid metabolism. In terms of biological role, prenyltransferase that catalyzes in vivo the transfer of the heptaprenyl moiety of heptaprenyl pyrophosphate (HepPP; 35 carbon atoms) to the C3 hydroxyl of sn-glycerol-1-phosphate (G1P), producing heptaprenylglyceryl phosphate (HepGP). This reaction is an ether-bond-formation step in the biosynthesis of archaea-type G1P-based membrane lipids found in Bacillales. The sequence is that of Heptaprenylglyceryl phosphate synthase from Listeria innocua serovar 6a (strain ATCC BAA-680 / CLIP 11262).